The chain runs to 336 residues: MSLLEDIVDLLKCVLEYFGVPPDMLVPVWESTHCGQYRSLVRMIGTNLPLSPYPRLRFQIPLQTFNKHSHIDVSVDSPAIPTLADVLWLVEDEGDSHTKFRNAVPLRKKCVPHGYETPSLGSVSVKAQRGGGVLAQSTQPDALLKISALEEELQRLRAQIATIITAPAGPVVSPTDPGTPCSAPKPAPVLTSTPVCPPPPPPPPPPAMPTRTEVSMSEMIQQRQAAKKETLAQCGPSLTTAPSMLEVLRDLNQVKLRSVERSPGGTPIRRRRSKGVACSSDPAALIAEALKRKFAHRQRDDSFGKENHSAEPSPFSSPDTPRIFQHTRRSQGRIHL.

A coiled-coil region spans residues 139-166; sequence QPDALLKISALEEELQRLRAQIATIITA. Residues 296-336 form a disordered region; sequence HRQRDDSFGKENHSAEPSPFSSPDTPRIFQHTRRSQGRIHL. Over residues 297-309 the composition is skewed to basic and acidic residues; sequence RQRDDSFGKENHS. The segment covering 325 to 336 has biased composition (basic residues); it reads QHTRRSQGRIHL.

Belongs to the MTFR1 family.

The protein resides in the mitochondrion. May play a role in mitochondrial aerobic respiration. Can also promote mitochondrial fission. The protein is Mitochondrial fission regulator 2 (mtfr2) of Danio rerio (Zebrafish).